The following is a 494-amino-acid chain: NAD(P)H-quinone oxidoreductase subunit 2 B, chloroplastic (494 aa).

14 helical membrane-spanning segments follow: residues 13 to 33, 39 to 59, 81 to 101, 107 to 127, 131 to 151, 166 to 186, 211 to 231, 243 to 263, 277 to 297, 305 to 325, 336 to 356, 378 to 398, 411 to 433, and 468 to 488; these read SILP…IDLI, TPWL…ILLF, IFRL…IDYI, ALTE…FLCC, LVTI…LSGY, LLMG…LYGL, MFIS…LVPF, PTPV…ALAT, WHLL…FIAV, MLAY…IAAE, YMLI…LFGL, LSLV…GFFG, LYFL…LKII, and MIIC…IIAI.

It belongs to the complex I subunit 2 family. As to quaternary structure, NDH is composed of at least 16 different subunits, 5 of which are encoded in the nucleus.

It is found in the plastid. The protein localises to the chloroplast thylakoid membrane. The catalysed reaction is a plastoquinone + NADH + (n+1) H(+)(in) = a plastoquinol + NAD(+) + n H(+)(out). It carries out the reaction a plastoquinone + NADPH + (n+1) H(+)(in) = a plastoquinol + NADP(+) + n H(+)(out). Functionally, NDH shuttles electrons from NAD(P)H:plastoquinone, via FMN and iron-sulfur (Fe-S) centers, to quinones in the photosynthetic chain and possibly in a chloroplast respiratory chain. The immediate electron acceptor for the enzyme in this species is believed to be plastoquinone. Couples the redox reaction to proton translocation, and thus conserves the redox energy in a proton gradient. The protein is NAD(P)H-quinone oxidoreductase subunit 2 B, chloroplastic of Angiopteris evecta (Mule's foot fern).